The chain runs to 122 residues: UPF0102 protein Rleg2_4331 (122 aa).

This sequence belongs to the UPF0102 family.

This is UPF0102 protein Rleg2_4331 from Rhizobium leguminosarum bv. trifolii (strain WSM2304).